The primary structure comprises 87 residues: Small ribosomal subunit protein bS20 (87 aa).

The span at 1-15 shows a compositional bias: basic residues; it reads MANHKSAMKRIKQTA. The disordered stretch occupies residues 1 to 27; sequence MANHKSAMKRIKQTAKRTERNKHERST. The span at 16–27 shows a compositional bias: basic and acidic residues; the sequence is KRTERNKHERST.

Belongs to the bacterial ribosomal protein bS20 family.

Functionally, binds directly to 16S ribosomal RNA. The protein is Small ribosomal subunit protein bS20 of Citrifermentans bemidjiense (strain ATCC BAA-1014 / DSM 16622 / JCM 12645 / Bem) (Geobacter bemidjiensis).